The primary structure comprises 109 residues: Urocortin-2 (109 aa).

The first 22 residues, 1 to 22 (MTRWALVVFMVLMLDRVPGTPI), serve as a signal peptide directing secretion. Positions 23–67 (PTFQLLPQNYPETTPSSVSSESPSDTTTGPSASWSNSKASPYLDT) are excised as a propeptide. A disordered region spans residues 24-60 (TFQLLPQNYPETTPSSVSSESPSDTTTGPSASWSNSK). Low complexity predominate over residues 33–50 (PETTPSSVSSESPSDTTT). Positions 51–60 (GPSASWSNSK) are enriched in polar residues. Val106 carries the valine amide; partial modification.

It belongs to the sauvagine/corticotropin-releasing factor/urotensin I family. As to quaternary structure, binds with high affinity to CRF receptors 2-alpha and 2-beta. Glycosylated.

Its subcellular location is the secreted. In terms of biological role, suppresses food intake, delays gastric emptying and decreases heat-induced edema. Might represent an endogenous ligand for maintaining homeostasis after stress. This is Urocortin-2 (Ucn2) from Rattus norvegicus (Rat).